The primary structure comprises 341 residues: Phosphoribosylformylglycinamidine cyclo-ligase (341 aa).

The protein belongs to the AIR synthase family.

It is found in the cytoplasm. The catalysed reaction is 2-formamido-N(1)-(5-O-phospho-beta-D-ribosyl)acetamidine + ATP = 5-amino-1-(5-phospho-beta-D-ribosyl)imidazole + ADP + phosphate + H(+). Its pathway is purine metabolism; IMP biosynthesis via de novo pathway; 5-amino-1-(5-phospho-D-ribosyl)imidazole from N(2)-formyl-N(1)-(5-phospho-D-ribosyl)glycinamide: step 2/2. The sequence is that of Phosphoribosylformylglycinamidine cyclo-ligase from Xanthomonas euvesicatoria pv. vesicatoria (strain 85-10) (Xanthomonas campestris pv. vesicatoria).